A 331-amino-acid polypeptide reads, in one-letter code: tRNA N6-adenosine threonylcarbamoyltransferase (331 aa).

The a divalent metal cation site is built by histidine 108, histidine 112, and tyrosine 129. Substrate-binding positions include 129–133, aspartate 161, glycine 176, glutamate 180, and asparagine 261; that span reads YASGG. An a divalent metal cation-binding site is contributed by aspartate 289.

The protein belongs to the KAE1 / TsaD family. In terms of assembly, component of the EKC/KEOPS complex composed of at least BUD32, CGI121, GON7, KAE1 and PCC1; the whole complex dimerizes. A divalent metal cation serves as cofactor.

The protein resides in the cytoplasm. It is found in the nucleus. It catalyses the reaction L-threonylcarbamoyladenylate + adenosine(37) in tRNA = N(6)-L-threonylcarbamoyladenosine(37) in tRNA + AMP + H(+). In terms of biological role, component of the EKC/KEOPS complex that is required for the formation of a threonylcarbamoyl group on adenosine at position 37 (t(6)A37) in tRNAs that read codons beginning with adenine. The complex is probably involved in the transfer of the threonylcarbamoyl moiety of threonylcarbamoyl-AMP (TC-AMP) to the N6 group of A37. KAE1 likely plays a direct catalytic role in this reaction, but requires other protein(s) of the complex to fulfill this activity. The EKC/KEOPS complex also promotes both telomere uncapping and telomere elongation. The complex is required for efficient recruitment of transcriptional coactivators. This chain is tRNA N6-adenosine threonylcarbamoyltransferase, found in Encephalitozoon cuniculi (strain GB-M1) (Microsporidian parasite).